The primary structure comprises 122 residues: Large ribosomal subunit protein uL14 (122 aa).

This sequence belongs to the universal ribosomal protein uL14 family. As to quaternary structure, part of the 50S ribosomal subunit. Forms a cluster with proteins L3 and L19. In the 70S ribosome, L14 and L19 interact and together make contacts with the 16S rRNA in bridges B5 and B8.

Binds to 23S rRNA. Forms part of two intersubunit bridges in the 70S ribosome. This is Large ribosomal subunit protein uL14 from Bordetella avium (strain 197N).